The following is a 307-amino-acid chain: Exosome complex component RRP45A (307 aa).

It belongs to the RNase PH family. Expressed in roots, leaves, stems, buds and siliques.

Its subcellular location is the cytoplasm. It is found in the nucleus. Probable 3'-&gt;5' exoribonuclease involved in the regulation of cuticular wax biosynthesis. Can perform exosomal functions and partially complement the yeast rrp45 null mutant. This chain is Exosome complex component RRP45A, found in Arabidopsis thaliana (Mouse-ear cress).